The chain runs to 133 residues: Capsid protein (133 aa).

The protein belongs to the Leviviricetes capsid protein family. As to quaternary structure, homodimer. The capsid protein dimer binds to the viral RNA via an operator hairpin, but also many other RNA sequences in the viral genome.

Its subcellular location is the virion. Functionally, capsid protein self-assembles to form an icosahedral capsid with a T=3 symmetry, about 26 nm in diameter, and consisting of 89 capsid proteins dimers (178 capsid proteins). Involved in viral genome encapsidation through the interaction between a capsid protein dimer and the multiple packaging signals present in the RNA genome. Binding of the capsid proteins to the viral RNA induces a conformational change required for efficient T=3 shell formation. The capsid also contains 1 copy of the A2 maturation protein. Its function is as follows. Acts as a translational repressor of viral replicase synthesis late in infection. This latter function is the result of capsid protein interaction with an RNA hairpin which contains the replicase ribosome-binding site. The polypeptide is Capsid protein (Escherichia coli).